Reading from the N-terminus, the 213-residue chain is Pyridoxine/pyridoxamine 5'-phosphate oxidase (213 aa).

Substrate-binding positions include 8 to 11 (RKNY) and lysine 66. FMN is bound by residues 61 to 66 (RIVLIK), 76 to 77 (FT), arginine 82, lysine 83, and glutamine 105. Tyrosine 123, arginine 127, and serine 131 together coordinate substrate. Residues 140–141 (QS) and tryptophan 184 contribute to the FMN site. 190–192 (RLH) lines the substrate pocket. Arginine 194 lines the FMN pocket.

The protein belongs to the pyridoxamine 5'-phosphate oxidase family. Homodimer. FMN serves as cofactor.

The catalysed reaction is pyridoxamine 5'-phosphate + O2 + H2O = pyridoxal 5'-phosphate + H2O2 + NH4(+). It carries out the reaction pyridoxine 5'-phosphate + O2 = pyridoxal 5'-phosphate + H2O2. It functions in the pathway cofactor metabolism; pyridoxal 5'-phosphate salvage; pyridoxal 5'-phosphate from pyridoxamine 5'-phosphate: step 1/1. The protein operates within cofactor metabolism; pyridoxal 5'-phosphate salvage; pyridoxal 5'-phosphate from pyridoxine 5'-phosphate: step 1/1. Catalyzes the oxidation of either pyridoxine 5'-phosphate (PNP) or pyridoxamine 5'-phosphate (PMP) into pyridoxal 5'-phosphate (PLP). The sequence is that of Pyridoxine/pyridoxamine 5'-phosphate oxidase from Paraburkholderia xenovorans (strain LB400).